The chain runs to 692 residues: Methionine--tRNA ligase (692 aa).

Residues 12-22 carry the 'HIGH' region motif; it reads PYANGPLHLGH. The Zn(2+) site is built by cysteine 143, cysteine 146, cysteine 156, and cysteine 159. A 'KMSKS' region motif is present at residues 330-334; the sequence is KMSKS. Position 333 (lysine 333) interacts with ATP. Low complexity predominate over residues 554–563; it reads AAAAPAAKPA. The tract at residues 554–575 is disordered; sequence AAAAPAAKPAAPAPAPAPAKDE. Residues 589–692 form the tRNA-binding domain; the sequence is DFAKLDLRIG…SGAQPGMPVR (104 aa).

This sequence belongs to the class-I aminoacyl-tRNA synthetase family. MetG type 1 subfamily. As to quaternary structure, homodimer. Zn(2+) is required as a cofactor.

It is found in the cytoplasm. It carries out the reaction tRNA(Met) + L-methionine + ATP = L-methionyl-tRNA(Met) + AMP + diphosphate. Is required not only for elongation of protein synthesis but also for the initiation of all mRNA translation through initiator tRNA(fMet) aminoacylation. The chain is Methionine--tRNA ligase from Stenotrophomonas maltophilia (strain K279a).